The chain runs to 79 residues: Small ribosomal subunit protein uS11 (79 aa).

The residue at position 14 (Ser14) is a Phosphoserine. Residues Lys59 and Lys61 each participate in a glycyl lysine isopeptide (Lys-Gly) (interchain with G-Cter in SUMO2) cross-link.

Belongs to the universal ribosomal protein uS11 family. As to quaternary structure, component of the small ribosomal subunit. Part of the small subunit (SSU) processome, composed of more than 70 proteins and the RNA chaperone small nucleolar RNA (snoRNA) U3.

The protein localises to the cytoplasm. The protein resides in the nucleus. It is found in the nucleolus. In terms of biological role, component of the small ribosomal subunit. The ribosome is a large ribonucleoprotein complex responsible for the synthesis of proteins in the cell. Part of the small subunit (SSU) processome, first precursor of the small eukaryotic ribosomal subunit. During the assembly of the SSU processome in the nucleolus, many ribosome biogenesis factors, an RNA chaperone and ribosomal proteins associate with the nascent pre-rRNA and work in concert to generate RNA folding, modifications, rearrangements and cleavage as well as targeted degradation of pre-ribosomal RNA by the RNA exosome. The chain is Small ribosomal subunit protein uS11 (RPS14) from Sus scrofa (Pig).